The chain runs to 100 residues: UPF0235 protein TC_0667 (100 aa).

The protein belongs to the UPF0235 family.

The sequence is that of UPF0235 protein TC_0667 from Chlamydia muridarum (strain MoPn / Nigg).